The chain runs to 454 residues: Probable DNA primase large subunit (454 aa).

[4Fe-4S] cluster is bound by residues C280, C359, C375, and C415.

This sequence belongs to the eukaryotic-type primase large subunit family. In terms of assembly, heterodimer of a small subunit and a large subunit. [4Fe-4S] cluster serves as cofactor.

In terms of biological role, DNA primase is the polymerase that synthesizes small RNA primers for the Okazaki fragments made during discontinuous DNA replication. This Arabidopsis thaliana (Mouse-ear cress) protein is Probable DNA primase large subunit.